Here is a 146-residue protein sequence, read N- to C-terminus: uncharacterized protein (146 aa).

A Toprim domain is found at 31 to 119 (EKVMIVEGKS…RAYKEVAAAP (89 aa)).

This is an uncharacterized protein from Bacillus subtilis (strain 168).